The primary structure comprises 365 residues: Peptide chain release factor 2 (365 aa).

At Gln252 the chain carries N5-methylglutamine.

Belongs to the prokaryotic/mitochondrial release factor family. Post-translationally, methylated by PrmC. Methylation increases the termination efficiency of RF2.

It is found in the cytoplasm. Functionally, peptide chain release factor 2 directs the termination of translation in response to the peptide chain termination codons UGA and UAA. In Pasteurella multocida (strain Pm70), this protein is Peptide chain release factor 2.